The primary structure comprises 254 residues: Insulin-like growth factor-binding protein 4 (254 aa).

The first 21 residues, 1–21, serve as a signal peptide directing secretion; it reads MLPFGLVAALLLAAGPRPSLG. Positions 23–103 constitute an IGFBP N-terminal domain; that stretch reads EAIHCPPCSE…MHGQGVCTEL (81 aa). 6 disulfide bridges follow: Cys27–Cys53, Cys30–Cys55, Cys38–Cys56, Cys44–Cys59, Cys67–Cys80, and Cys74–Cys100. A glycan (N-linked (GlcNAc...) asparagine) is linked at Asn125. Cys131 and Cys138 are disulfide-bonded. Residues 149–169 form a disordered region; sequence RSKMKVVGTPREEPRPVPQGS. One can recognise a Thyroglobulin type-1 domain in the interval 167 to 245; that stretch reads QGSCQSELHR…GLEPKGELDC (79 aa). 3 disulfide bridges follow: Cys170-Cys200, Cys211-Cys222, and Cys224-Cys245. A Phosphoserine modification is found at Ser251.

As to quaternary structure, binds IGF2 more than IGF1.

It is found in the secreted. Functionally, IGF-binding proteins prolong the half-life of the IGFs and have been shown to either inhibit or stimulate the growth promoting effects of the IGFs on cell culture. They alter the interaction of IGFs with their cell surface receptors. This Rattus norvegicus (Rat) protein is Insulin-like growth factor-binding protein 4 (Igfbp4).